A 513-amino-acid polypeptide reads, in one-letter code: rRNA N(6)-adenosine-methyltransferase ZCCHC4 (513 aa).

Zn(2+)-binding residues include C40, H42, C64, C73, C125, C128, H140, and H143. The GRF-type zinc-finger motif lies at 40 to 82; it reads CPHGPTLLFVKVTQGKEETRRFYACSACRDRKDCNFFQWEDEK. Residues 172–175, R202, D225, 243–244, and D276 contribute to the S-adenosyl-L-methionine site; these read QYLF and NM. Residues 337-357 are regulatory loop; the sequence is QVDYDNHALYKHGKTGRKQSP. Zn(2+) contacts are provided by C380, C383, H393, C394, C397, C400, H410, C411, C414, C417, H424, C425, C428, C431, H436, and C438. One can recognise a DHHC domain in the interval 395–447; it reads ELCNSCTSKDGRKWNHCFLCKKCVKPSWIHCSICNHCAVPDHSCEGPKHGCFI. The segment at 443–460 adopts a CCHC-type zinc-finger fold; the sequence is HGCFICGELDHKRSTCPN. Residues 466–481 are compositionally biased toward basic residues; it reads RANKAVRKQKQRKSNK. The interval 466-513 is disordered; the sequence is RANKAVRKQKQRKSNKMKMETTKGQSMNHTSATRRKKRRERAHQYLGS. Over residues 487 to 496 the composition is skewed to polar residues; sequence TKGQSMNHTS. The span at 497-506 shows a compositional bias: basic residues; it reads ATRRKKRRER.

The protein belongs to the ZCCHC4 family. In terms of assembly, interacts with components of the ASC-1 complex TRIP4, ASCC1, ASCC2 and ASCC3. Interact with AHCYL1 and AHCYL2. Interact with YTHDC2.

It localises to the nucleus. Its subcellular location is the nucleolus. It is found in the cytoplasm. It catalyses the reaction adenosine(4220) in 28S rRNA + S-adenosyl-L-methionine = N(6)-methyladenosine(4220) in 28S rRNA + S-adenosyl-L-homocysteine + H(+). Functionally, rRNA N6-methyltransferase that specifically methylates the adenine in position 4220 of 28S rRNA. N6-methylation of adenine(4220) in 28S rRNA is required for translation. The sequence is that of rRNA N(6)-adenosine-methyltransferase ZCCHC4 from Homo sapiens (Human).